A 188-amino-acid chain; its full sequence is MTIKSDKWIRRMAQETGMIEPFEPGQVRQSNGQKIVSYGTSSYGYDIRCADEFKIFTNINSTIVDPKNFDENSFVDVKSDVCIIPPNSFALARTIEYFRIPRNVLTICLGKSTYARCGIIVNVTPFEPEWEGYVTLEFSNTTPLPAKIYAGEGCAQVLFFESDEVCEVSYKDRGGKYQGQHGVTLPKA.

DCTP is bound by residues 111 to 116 (KSTYAR), 135 to 137 (TLE), Gln-156, Tyr-170, and Gln-180. Glu-137 acts as the Proton donor/acceptor in catalysis.

The protein belongs to the dCTP deaminase family. Homotrimer.

It catalyses the reaction dCTP + H2O + H(+) = dUTP + NH4(+). The protein operates within pyrimidine metabolism; dUMP biosynthesis; dUMP from dCTP (dUTP route): step 1/2. Its function is as follows. Catalyzes the deamination of dCTP to dUTP. The polypeptide is dCTP deaminase (Herminiimonas arsenicoxydans).